We begin with the raw amino-acid sequence, 125 residues long: Small ribosomal subunit protein uS13 (125 aa).

This sequence belongs to the universal ribosomal protein uS13 family. Part of the 30S ribosomal subunit. Forms a loose heterodimer with protein S19. Forms two bridges to the 50S subunit in the 70S ribosome.

In terms of biological role, located at the top of the head of the 30S subunit, it contacts several helices of the 16S rRNA. In the 70S ribosome it contacts the 23S rRNA (bridge B1a) and protein L5 of the 50S subunit (bridge B1b), connecting the 2 subunits; these bridges are implicated in subunit movement. Contacts the tRNAs in the A and P-sites. This is Small ribosomal subunit protein uS13 from Rickettsia typhi (strain ATCC VR-144 / Wilmington).